Reading from the N-terminus, the 686-residue chain is ATP-dependent zinc metalloprotease FTSH 1, chloroplastic (686 aa).

The N-terminal 16 residues, Met1–Thr16, are a transit peptide targeting the chloroplast. The helical transmembrane segment at Phe173–Leu193 threads the bilayer. Gly272–Thr279 contributes to the ATP binding site. Residue His494 coordinates Zn(2+). Residue Glu495 is part of the active site. The Zn(2+) site is built by His498 and Asp575.

In the N-terminal section; belongs to the AAA ATPase family. This sequence in the C-terminal section; belongs to the peptidase M41 family. Requires Zn(2+) as cofactor.

The protein resides in the plastid. Its subcellular location is the chloroplast thylakoid membrane. Functionally, probable ATP-dependent zinc metallopeptidase. The protein is ATP-dependent zinc metalloprotease FTSH 1, chloroplastic (FTSH1) of Oryza sativa subsp. japonica (Rice).